The chain runs to 250 residues: Kallikrein-14 (250 aa).

A signal peptide spans 1 to 18 (MFLLLIILQALAVAIAQS). A propeptide spans 19 to 23 (QGDHK) (activation peptide). In terms of domain architecture, Peptidase S1 spans 24–248 (IIGGYRCVRN…YHSWIQRTMQ (225 aa)). Residues C51 and C67 are joined by a disulfide bond. Residues H66 and D110 each act as charge relay system in the active site. 3 disulfides stabilise this stretch: C142–C209, C174–C188, and C199–C224. Residue S203 is the Charge relay system of the active site.

It belongs to the peptidase S1 family. Kallikrein subfamily. In terms of processing, proteolytic cleavage of the activation peptide produces the active enzyme.

It is found in the secreted. The protein localises to the extracellular space. Inhibited by SERPINA1, SERPINC1, SERPINE1, SERPINF2, aprotinin, soybean, trypsin inhibitor and leupeptin. Inhibited by serine protease inhibitor SPINK5. Has an autoproteolytic activity which may have a regulatory effect. Activated by citrate and inhibited by zinc and to a lower extent by manganese. In terms of biological role, serine-type endopeptidase with a dual trypsin-like and chymotrypsin-like substrate specificity. May activate/inactivate the proteinase-activated receptors F2R, F2RL1 and F2RL3 and other kallikreins including KLK1, KLK3, KLK5 and KLK11. May function in seminal clot liquefaction through direct cleavage of the semenogelin SEMG1 and SEMG2 and activation of KLK3. May function through desmoglein DSG1 cleavage in epidermal desquamation a process by which the most superficial corneocytes are shed from the skin surface. May be involved in several aspects of tumor progression including growth, invasion and angiogenesis. This chain is Kallikrein-14 (Klk14), found in Mus musculus (Mouse).